Reading from the N-terminus, the 125-residue chain is DNA-directed RNA polymerase II subunit RPB9 (125 aa).

Residue M1 is modified to N-acetylmethionine. Residues C17, C20, C39, C42, C86, C89, C114, and C119 each contribute to the Zn(2+) site. The segment at 17-42 adopts a C4-type zinc-finger fold; that stretch reads CQECNNMLYPKEDKENRILLYACRNC. The segment at 82 to 124 adopts a TFIIS-type zinc-finger fold; that stretch reads EDHPCQKCGHKEAVFFQSHSARAEDAMRLYYVCTAPHCGHRWT.

This sequence belongs to the archaeal RpoM/eukaryotic RPA12/RPB9/RPC11 RNA polymerase family. As to quaternary structure, component of the RNA polymerase II (Pol II) core complex consisting of 12 subunits: a ten-subunit catalytic core composed of POLR2A/RPB1, POLR2B/RPB2, POLR2C/RPB3, POLR2I/RPB9, POLR2J/RPB11, POLR2E/RPABC1, POLR2F/RPABC2, POLR2H/RPABC3, POLR2K/RPABC4 and POLR2L/RPABC5 and a mobile stalk composed of two subunits POLR2D/RPB4 and POLR2G/RPB7, protruding from the core and functioning primarily in transcription initiation. Part of Pol II(G) complex, in which Pol II core associates with an additional subunit POLR2M; unlike conventional Pol II, Pol II(G) functions as a transcriptional repressor. Part of TBP-based Pol II pre-initiation complex (PIC), in which Pol II core assembles with general transcription factors and other specific initiation factors including GTF2E1, GTF2E2, GTF2F1, GTF2F2, TCEA1, ERCC2, ERCC3, GTF2H2, GTF2H3, GTF2H4, GTF2H5, GTF2A1, GTF2A2, GTF2B and TBP; this large multi-subunit PIC complex mediates DNA unwinding and targets Pol II core to the transcription start site where the first phosphodiester bond forms.

The protein resides in the nucleus. Its subcellular location is the nucleolus. Its function is as follows. DNA-dependent RNA polymerase catalyzes the transcription of DNA into RNA using the four ribonucleoside triphosphates as substrates. Component of RNA polymerase II which synthesizes mRNA precursors and many functional non-coding RNAs. Pol II is the central component of the basal RNA polymerase II transcription machinery. It is composed of mobile elements that move relative to each other. POLR2I/RPB9 is part of the upper jaw surrounding the central large cleft and thought to grab the incoming DNA template. This Bos taurus (Bovine) protein is DNA-directed RNA polymerase II subunit RPB9 (POLR2I).